Reading from the N-terminus, the 1263-residue chain is Valine--tRNA ligase (1263 aa).

Serine 2 carries the N-acetylserine modification. The GST C-terminal domain occupies 89-219 (GSRAAVLVQQ…YSGARSVTQQ (131 aa)). The interval 218–294 (QQPGSEVIAP…PGEKKDVSGA (77 aa)) is disordered. Composition is skewed to basic and acidic residues over residues 234–248 (LKKEAKKREKLEKFQ) and 259–274 (HGEKKPKPEKKEKRDP). The 'HIGH' region motif lies at 343-353 (PNVTGSLHLGH). Serine 436 and serine 526 each carry phosphoserine. Residue lysine 644 is modified to N6-acetyllysine. The 'KMSKS' region motif lies at 861–865 (KMSKS). Position 864 (lysine 864) interacts with ATP.

It belongs to the class-I aminoacyl-tRNA synthetase family. Forms high-molecular-mass aggregates with elongation factor 1.

The enzyme catalyses tRNA(Val) + L-valine + ATP = L-valyl-tRNA(Val) + AMP + diphosphate. Its activity is regulated as follows. Can be regulated by protein kinase C-dependent phosphorylation. The polypeptide is Valine--tRNA ligase (Vars1) (Mus musculus (Mouse)).